Here is a 1788-residue protein sequence, read N- to C-terminus: MMMASKDVVATNVASNNNANNTSATSRFLSRFKGLGGGASPPSPIKIKSTEMALGLIGRTTPEPTGTAGPPPKQQRDRPPRTQEEVQYGMGWSDRPIDQNVKSWEELDTTVKEEILDNHKEWFDAGGLGPCTMPPTYERVKDDSPPGEQVKWSARDGVNIGVERLTTVSGPEWNLCPLPPIDLRNMEPASEPTIGDMIEFYEGHIYHYSIYIGQGKTVGVHSPQAAFSVARVTIQPIAAWWRVCYIPQPKHRLSYDQLKELENEPWPYAAITNNCFEFCCQVMNLEDTWLQRRLVTSGRFHHPTQSWSQQTPEFQQDSKLELVRDAILAAVNGLVSQPFKNFLGKLKPLNVLNILSNCDWTFMGVVEMVILLLELFGVFWNPPDVSNFIASLLPDFHLQGPEDLARDLVPVILGGIGLAIGFTRDKVTKVMKSAVDGLRAATQLGQYGLEIFSLLKKYFFGGDQTERTLKGIEAAVIDMEVLSSTSVTQLVRDKQAAKAYMNILDNEEEKARKLSAKNADPHVISSTNALISRISMARSALAKAQAEMTSRMRPVVIMMCGPPGIGKTKAAEHLAKRLANEIRPGGKVGLVPREAVDHWDGYHGEEVMLWDDYGMTKILDDCNKLQAIADSAPLTLNCDRIENKGMQFVSDAIVITTNAPGPAPVDFVNLGPVCRRVDFLVYCSAPEVEQIRRVSPGDTSALKDCFKLDFSHLKMELAPQGGFDNQGNTPFGKGTMKPTTINRLLIQAVALTMERQDEFQLQGKMYDFDDDRVSAFTTMARDNGLGILSMAGLGKKLRGVTTMEGLKNALKGYKISACTIKWQAKVYSLESDGNSVNIKEERNILTQQQQSVCTASVALTRLRAARAVAYASCIQSAITSILQIAGSALVVNRAVKRMFGTRTATLSLEGPPREHKCRVHMAKAAGKGPIGHDDVVEKYGLCETEEDEEVAHTEIPSATMEGKNKGKNKKGRGRRNNYNAFSRRGLNDEEYEEYKKIREEKGGNYSIQEYLEDRQRYEEELAEVQAGGDGGIGETEMEIRHRVFYKSKSRKHHQEERRQLGLVTGSDIRKRKPIDWTPPKSAWADDEREVDYNEKISFEAPPTLWSRVTKFGSGWGFWVSPTVFITTTHVIPTSAKEFFGEPLTSIAIHRAGEFTLFRFSKKIRPDLTGMILEEGCPEGTVCSVLIKRDSGELLPLAVRMGAIASMRIQGRLVHGQSGMLLTGANAKGMDLGTIPGDCGAPYVYKRANDWVVCGVHAAATKSGNTVVCAVQASEGETTLEGGDKGHYAGHEIIKHGCGPALSTKTKFWKSSPEPLPPGVYEPAYLGGRDPRVTVGPSLQQVLRDQLKPFAEPRGRMPEPGLLEAAVETVTSSLEQVMDTPVPWSYSDACQSLDKTTSSGFPYHRRKNDDWNGTTFVRELGEQAAHANNMYEQAKSMKPMYTGALKDELVKPEKVYQKVKKRLLWGADLGTVVRAARAFGPFCDAIKSHTIKLPIKVGMNSIEDGPLIYAEHSKYKYHFDADYTAWDSTQNRQIMTESFSIMCRLTASPELASVVAQDLLAPSEMDVGDYVIRVKEGLPSGFPCTSQVNSINHWLITLCALSEVTGLSPDVIQSMSYFSFYGDDEIVSTDIEFDPAKLTQVLREYGLRPTRPDKSEGPIIVRKSVDGLVFLRRTISRDAAGFQGRLDRASIERQIYWTRGPNHSDPFETLVPHQQRKVQLISLLGEASLHGEKFYRKISSKVIQEIKTGGLEMYVPGWQAMFRWMRFHDLGLWTGDRNLLPEFVNDDGV.

An interaction with host MAP1LC3A/LC3 region spans residues methionine 1 to arginine 184. The span at glycine 58–alanine 68 shows a compositional bias: low complexity. The disordered stretch occupies residues glycine 58–valine 86. A compositionally biased stretch (basic and acidic residues) spans glutamine 74–glutamate 84. Residues asparagine 185 to glutamine 399 form an interaction with NTPase region. The interval histidine 302–glutamine 399 is interaction with NS4. 2 host ER membrane association regions span residues lysine 319–asparagine 350 and threonine 361–glutamine 399. An interaction with NS1-2 and NS4 and homooligomerization region spans residues glycine 400–alanine 575. Residues arginine 533–aspartate 698 enclose the SF3 helicase domain. Glycine 561 to threonine 568 serves as a coordination point for ATP. Residues alanine 652–aspartate 757 form an important for mitochondrion targeting region. The tract at residues tyrosine 827–glycine 833 is functions as endoplasmic reticulum export signal. Residues arginine 866 to proline 911 form a host membrane association region. A disordered region spans residues glutamate 948–asparagine 979. Positions lysine 965–arginine 975 are enriched in basic residues. The acidic stretch occupies residues aspartate 988 to glutamate 993. Residue tyrosine 991 is modified to O-(5'-phospho-RNA)-tyrosine. Residues tryptophan 1083 to glutamate 1099 are interaction with host EIF4G. The region spanning alanine 1100–glutamate 1280 is the Peptidase C37 domain. Active-site for 3CLpro activity residues include histidine 1129, glutamate 1153, and cysteine 1238. Residues lysine 1515–lysine 1636 form the RdRp catalytic domain. 4 residues coordinate Mg(2+): aspartate 1519, aspartate 1521, aspartate 1623, and glutamate 1624.

As to quaternary structure, homodimer. Homooligomer. Interacts with NTPase; this interaction increases the proapoptotic activity of the NTPase and is crucial for the formation of the viral replication complex. Interacts with NS4; this interaction is crucial for the formation of the viral replication complex. Interacts (via N-terminus) with host VAPA. Interacts with host MAP1LC3A/LC3; this interaction does not seem to be linked to host autophagy, but rather plays a role in the formation of viral factories. In terms of assembly, homooligomer. Interacts with NS1-2; this interaction increases the proapoptotic activity of the NTPase and is crucial for the formation of the viral replication complex. Interacts with NS4; this interaction increases the proapoptotic activity of the NTPase. Homodimer. Monomer; in solution. As to quaternary structure, interacts with NTPase; this interaction increases the proapoptotic activity of the NTPase. Interacts with NS1-2; this interaction is crucial for the formation of the viral replication complex. In terms of assembly, monomer. Interacts with the RNA-directed RNA polymerase; this interaction induces the multimerization of the RdRp and enhances its activity. Interacts with host IEF4G1; this interaction plays a role in translation of viral proteins. Homohexamer; also forms fibrous hexameric oligomer. Interacts with the viral genome-linked protein; this interaction induces the multimerization of the RdRp and enhances its activity. Mg(2+) is required as a cofactor. It depends on Mn(2+) as a cofactor. Post-translationally, specific enzymatic cleavages in vivo yield mature proteins. 3CLpro is first autocatalytically cleaved, then processes the whole polyprotein. NS1/2-3 and NS3-4 sites are cleaved rapidly and NS4-5, NS5-6, and NS6-7 sites are processed subsequently and less efficiently. In terms of processing, VPg is uridylylated by the polymerase and is covalently attached to the 5'-end of the polyadenylated genomic and subgenomic RNAs. This uridylylated form acts as a nucleotide-peptide primer for the polymerase.

It is found in the host Golgi apparatus membrane. The protein localises to the host endoplasmic reticulum membrane. It catalyses the reaction a ribonucleoside 5'-triphosphate + H2O = a ribonucleoside 5'-diphosphate + phosphate + H(+). It carries out the reaction Endopeptidase with a preference for cleavage when the P1 position is occupied by Glu-|-Xaa and the P1' position is occupied by Gly-|-Yaa.. The enzyme catalyses RNA(n) + a ribonucleoside 5'-triphosphate = RNA(n+1) + diphosphate. Functionally, induces the proliferation of the host smooth ER membranes forming long tubular structures. These remodeled membranes probably form the viral factories that contain the replication complex. May play a role in viral replication by interacting with host VAPA, a vesicle-associated membrane protein that plays a role in SNARE-mediated vesicle fusion. This interaction may target replication complex to intracellular membranes. Displays NTPase activity, but no helicase activity. Induces the formation of convoluted membranes derived from the host ER. These remodeled membranes probably form the viral factories that contain the replication complex. Initiates host cell death by targeting the mitochondrial outer membrane, leading to the permeabilization of mitochondria, programmed host cell death and viral egress. Probably plays a role in preventing the assembly of host stress granules. Its function is as follows. Probable key protein responsible for the formation of membrane alterations by the virus. Induces the formation of convoluted membranes derived from the host ER. These remodeled membranes probably form the viral factories that contain the replication complex. May play a role in targeting replication complex to intracellular membranes. In terms of biological role, viral genome-linked protein is covalently linked to the 5'-end of the positive-strand, negative-strand genomic RNAs and subgenomic RNA. Acts as a genome-linked replication primer. May recruit ribosome to viral RNA thereby promoting viral proteins translation. Interacts with host translation initiation complex to allow the translation of viral proteins. Induces the formation of aggregates of RNA-directed RNA polymerase in the presence of RNA. Through its interaction with the viral RNA-directed RNA polymerase, plays a crucial role in enhancing the polymerase activity. Functionally, processes the polyprotein. 3CLpro-RdRp is first released by autocleavage, then all other proteins are cleaved. May cleave polyadenylate-binding protein thereby inhibiting cellular translation. Replicates genomic and antigenomic RNA by recognizing replications specific signals. Also transcribes a subgenomic mRNA by initiating RNA synthesis internally on antigenomic RNA. This sgRNA codes for structural proteins. Catalyzes the covalent attachment VPg with viral RNAs. This Southampton virus (strain GI/Human/United Kingdom/Southampton/1991) (SHV) protein is Genome polyprotein.